Consider the following 429-residue polypeptide: UDP-N-acetylglucosamine 1-carboxyvinyltransferase (429 aa).

22–23 (KN) is a phosphoenolpyruvate binding site. R102 is a UDP-N-acetyl-alpha-D-glucosamine binding site. The active-site Proton donor is the C126. C126 carries the 2-(S-cysteinyl)pyruvic acid O-phosphothioketal modification. Residues 131–135 (RPVDL), D316, and I338 contribute to the UDP-N-acetyl-alpha-D-glucosamine site.

The protein belongs to the EPSP synthase family. MurA subfamily.

It localises to the cytoplasm. It catalyses the reaction phosphoenolpyruvate + UDP-N-acetyl-alpha-D-glucosamine = UDP-N-acetyl-3-O-(1-carboxyvinyl)-alpha-D-glucosamine + phosphate. It functions in the pathway cell wall biogenesis; peptidoglycan biosynthesis. Functionally, cell wall formation. Adds enolpyruvyl to UDP-N-acetylglucosamine. This chain is UDP-N-acetylglucosamine 1-carboxyvinyltransferase, found in Afipia carboxidovorans (strain ATCC 49405 / DSM 1227 / KCTC 32145 / OM5) (Oligotropha carboxidovorans).